Reading from the N-terminus, the 828-residue chain is DNA gyrase subunit A (828 aa).

The region spanning 32–497 is the Topo IIA-type catalytic domain; it reads LPDVRDGLKP…EVLSLEDEDL (466 aa). The active-site O-(5'-phospho-DNA)-tyrosine intermediate is Y120. Positions 524 to 530 match the GyrA-box motif; it reads QKRGGRG.

Belongs to the type II topoisomerase GyrA/ParC subunit family. As to quaternary structure, heterotetramer, composed of two GyrA and two GyrB chains. In the heterotetramer, GyrA contains the active site tyrosine that forms a transient covalent intermediate with DNA, while GyrB binds cofactors and catalyzes ATP hydrolysis.

It is found in the cytoplasm. The enzyme catalyses ATP-dependent breakage, passage and rejoining of double-stranded DNA.. A type II topoisomerase that negatively supercoils closed circular double-stranded (ds) DNA in an ATP-dependent manner to modulate DNA topology and maintain chromosomes in an underwound state. Negative supercoiling favors strand separation, and DNA replication, transcription, recombination and repair, all of which involve strand separation. Also able to catalyze the interconversion of other topological isomers of dsDNA rings, including catenanes and knotted rings. Type II topoisomerases break and join 2 DNA strands simultaneously in an ATP-dependent manner. This is DNA gyrase subunit A from Streptococcus pyogenes serotype M1.